The following is a 404-amino-acid chain: G-protein coupled receptor 143 (404 aa).

Residues 1 to 28 (MASPRLGTFCCPTRDAATQLVLSFQPRA) lie on the Extracellular side of the membrane. A helical transmembrane segment spans residues 29-49 (FHALCLGSGGLRLALGLLQLL). Residues 50–78 (PGRRPAGPGSPATSPPASVRILRAAAACD) lie on the Cytoplasmic side of the membrane. A helical transmembrane segment spans residues 79-99 (LLGCLGMVIRSTVWLGFPNFV). The Extracellular segment spans residues 100–124 (DSVSDMNHTEIWPAAFCVGSAMWIQ). The N-linked (GlcNAc...) asparagine glycan is linked to Asn106. A helical membrane pass occupies residues 125 to 145 (LLYSACFWWLFCYAVDAYLVI). The Cytoplasmic portion of the chain corresponds to 146 to 149 (RRSA). Residues 150–170 (GLSTILLYHIMAWGLATLLCV) form a helical membrane-spanning segment. The Extracellular portion of the chain corresponds to 171–191 (EGAAMLYYPSVSRCERGLDHA). Residues 192–212 (IPHYVTMYLPLLLVLVANPIL) form a helical membrane-spanning segment. Over 213–248 (FQKTVTAVASLLKGRQGIYTENERRMGAVIKIRFFK) the chain is Cytoplasmic. The segment at 221 to 238 (ASLLKGRQGIYTENERRM) is necessary for its G protein-activation ability and normal distribution of melanosomes. A lysosomal/melanosomal membrane localization signal motif is present at residues 222 to 231 (SLLKGRQGIY). Residues 249–269 (IMLVLIICWLSNIINESLLFY) traverse the membrane as a helical segment. The Extracellular segment spans residues 270-292 (LEMQTDINGGSLKPVRTAAKTTW). Residues 293-313 (FIMGILNPAQGFLLSLAFYGW) form a helical membrane-spanning segment. The Cytoplasmic portion of the chain corresponds to 314–404 (TGCSLGFQSP…DPALPTHGDL (91 aa)). Residues 329–330 (WE) carry the lysosomal/melanosomal membrane localization signal motif. Positions 338–404 (EGAHPSPLMP…DPALPTHGDL (67 aa)) are disordered. Residues 355–366 (KVSQVGGQTSDE) are compositionally biased toward polar residues.

The protein belongs to the G-protein coupled receptor OA family. In terms of assembly, interacts with heterotrimeric G(i) proteins. Interacts with ARRB1 and ARRB2. Interacts with MLANA. In terms of processing, glycosylated. Phosphorylated. Expressed at high levels in the retina, including the retinal pigment epithelium (RPE), and in melanocytes. Weak expression is observed in brain and adrenal gland.

The protein localises to the melanosome membrane. The protein resides in the lysosome membrane. Its subcellular location is the apical cell membrane. Its function is as follows. Receptor for tyrosine, L-DOPA and dopamine. After binding to L-DOPA, stimulates Ca(2+) influx into the cytoplasm, increases secretion of the neurotrophic factor SERPINF1 and relocalizes beta arrestin at the plasma membrane; this ligand-dependent signaling occurs through a G(q)-mediated pathway in melanocytic cells. Its activity is mediated by G proteins which activate the phosphoinositide signaling pathway. Also plays a role as an intracellular G protein-coupled receptor involved in melanosome biogenesis, organization and transport. The polypeptide is G-protein coupled receptor 143 (GPR143) (Homo sapiens (Human)).